Here is a 423-residue protein sequence, read N- to C-terminus: tRNA(Met) cytidine acetate ligase (423 aa).

Residues 7–20 (VVEYNPFHNGHLYH), Gly102, Asn165, and Arg190 contribute to the ATP site.

The protein belongs to the TmcAL family.

It localises to the cytoplasm. The catalysed reaction is cytidine(34) in elongator tRNA(Met) + acetate + ATP = N(4)-acetylcytidine(34) in elongator tRNA(Met) + AMP + diphosphate. Catalyzes the formation of N(4)-acetylcytidine (ac(4)C) at the wobble position of elongator tRNA(Met), using acetate and ATP as substrates. First activates an acetate ion to form acetyladenylate (Ac-AMP) and then transfers the acetyl group to tRNA to form ac(4)C34. The sequence is that of tRNA(Met) cytidine acetate ligase from Thermosipho africanus (strain TCF52B).